A 577-amino-acid chain; its full sequence is Proline--tRNA ligase (577 aa).

The protein belongs to the class-II aminoacyl-tRNA synthetase family. ProS type 1 subfamily. Homodimer.

It localises to the cytoplasm. The enzyme catalyses tRNA(Pro) + L-proline + ATP = L-prolyl-tRNA(Pro) + AMP + diphosphate. Functionally, catalyzes the attachment of proline to tRNA(Pro) in a two-step reaction: proline is first activated by ATP to form Pro-AMP and then transferred to the acceptor end of tRNA(Pro). As ProRS can inadvertently accommodate and process non-cognate amino acids such as alanine and cysteine, to avoid such errors it has two additional distinct editing activities against alanine. One activity is designated as 'pretransfer' editing and involves the tRNA(Pro)-independent hydrolysis of activated Ala-AMP. The other activity is designated 'posttransfer' editing and involves deacylation of mischarged Ala-tRNA(Pro). The misacylated Cys-tRNA(Pro) is not edited by ProRS. This Limosilactobacillus reuteri (strain DSM 20016) (Lactobacillus reuteri) protein is Proline--tRNA ligase.